We begin with the raw amino-acid sequence, 168 residues long: Transcription antitermination protein NusB (168 aa).

This sequence belongs to the NusB family.

Involved in transcription antitermination. Required for transcription of ribosomal RNA (rRNA) genes. Binds specifically to the boxA antiterminator sequence of the ribosomal RNA (rrn) operons. The sequence is that of Transcription antitermination protein NusB from Bradyrhizobium sp. (strain ORS 278).